The primary structure comprises 353 residues: Photosystem II protein D1 (353 aa).

An N-acetylthreonine modification is found at threonine 2. Phosphothreonine is present on threonine 2. Transmembrane regions (helical) follow at residues 29 to 46 (YIGWFGVIMIPTLLTATS), 118 to 133 (HFFLGICCYMGREWEL), and 142 to 156 (WIAVAYSAPVAAATA). Histidine 118 lines the chlorophyll a pocket. Tyrosine 126 provides a ligand contact to pheophytin a. Positions 170 and 189 each coordinate [CaMn4O5] cluster. A helical transmembrane segment spans residues 197 to 218 (FHMLGVAGVFGGSLFSAMHGSL). Residue histidine 198 participates in chlorophyll a binding. Residues histidine 215 and 264–265 (SF) contribute to the a quinone site. Residue histidine 215 participates in Fe cation binding. Histidine 272 is a Fe cation binding site. The chain crosses the membrane as a helical span at residues 274 to 288 (FLAAWPVVGIWFTAL). The [CaMn4O5] cluster site is built by histidine 332, glutamate 333, aspartate 342, and alanine 344. Positions 345-353 (SVEAPSVNA) are excised as a propeptide.

Belongs to the reaction center PufL/M/PsbA/D family. PSII is composed of 1 copy each of membrane proteins PsbA, PsbB, PsbC, PsbD, PsbE, PsbF, PsbH, PsbI, PsbJ, PsbK, PsbL, PsbM, PsbT, PsbX, PsbY, PsbZ, Psb30/Ycf12, at least 3 peripheral proteins of the oxygen-evolving complex and a large number of cofactors. It forms dimeric complexes. It depends on The D1/D2 heterodimer binds P680, chlorophylls that are the primary electron donor of PSII, and subsequent electron acceptors. It shares a non-heme iron and each subunit binds pheophytin, quinone, additional chlorophylls, carotenoids and lipids. D1 provides most of the ligands for the Mn4-Ca-O5 cluster of the oxygen-evolving complex (OEC). There is also a Cl(-1) ion associated with D1 and D2, which is required for oxygen evolution. The PSII complex binds additional chlorophylls, carotenoids and specific lipids. as a cofactor. The 9 C-terminal residues are removed, probably by CTPA (AC O04073); processing is essential to allow assembly of the oxygen-evolving complex and thus photosynthetic growth. Post-translationally, tyr-161 forms a radical intermediate that is referred to as redox-active TyrZ, YZ or Y-Z.

The protein localises to the plastid. Its subcellular location is the chloroplast thylakoid membrane. The catalysed reaction is 2 a plastoquinone + 4 hnu + 2 H2O = 2 a plastoquinol + O2. Its function is as follows. Photosystem II (PSII) is a light-driven water:plastoquinone oxidoreductase that uses light energy to abstract electrons from H(2)O, generating O(2) and a proton gradient subsequently used for ATP formation. It consists of a core antenna complex that captures photons, and an electron transfer chain that converts photonic excitation into a charge separation. The D1/D2 (PsbA/PsbD) reaction center heterodimer binds P680, the primary electron donor of PSII as well as several subsequent electron acceptors. In Tetradesmus obliquus (Green alga), this protein is Photosystem II protein D1.